The chain runs to 287 residues: MVNDLTPHFEDVQAHYDLSDDFFRLFLDPTQTYSCAHFEREDMTLEEAQIAKIDLALGKLGLQPGMTLLDIGCGWGATMRRAIAQYDVNVVGLTLSKNQAAHVQKSFDEMDTPLDRRVLLAGWEQFNEPVDRIVSIGAFEHFGHDRHADFFARAHKILPPDGVLLLHTITGLTRQQMVDHGLPLTLWLARFLKFIATEIFPGGQPPTIEMVEEQSAKTGFTLTRRQSLQPHYARTLDLWAEALQEHKSEAIAIQSEEVYERYMKYLTGCAKLFRVGYIDVNQFTLAK.

Residues 33 to 34 (YS), 72 to 74 (GCG), 94 to 99 (TLSKNQ), 123 to 124 (WE), and I136 each bind S-adenosyl-L-methionine. The active site involves C269.

It belongs to the CFA/CMAS family.

The enzyme catalyses a 1-acyl-2-(9Z)-enoyl-sn-glycero-3-phospholipid + S-adenosyl-L-methionine = a 1-acyl-2-(9-cyclopronane)-acyl-sn-glycero-3-phospholipid + S-adenosyl-L-homocysteine + H(+). It participates in lipid metabolism; mycolic acid biosynthesis. In terms of biological role, catalyzes the conversion of a double bond to a cis cyclopropane ring at the distal position of an alpha mycolic acid via the transfer of a methylene group from S-adenosyl-L-methionine. MmaA2 also catalyzes the biosynthesis of the cis-cyclopropanated methoxymycolates. Cyclopropanated mycolic acids are key factors participating in cell envelope permeability, host immunomodulation and persistence. The sequence is that of Cyclopropane mycolic acid synthase MmaA2 (cmaC) from Mycobacterium bovis (strain ATCC BAA-935 / AF2122/97).